The sequence spans 98 residues: MPLINVAGSLLYSALYFSAESEYMQKAHSASDLSYFFASGSNQTERAGSYIGSRQIRCLSSIGSSALTKFVVSLKQPNPPVEPSSKALSHASPPSVSS.

The interval 77–98 (PNPPVEPSSKALSHASPPSVSS) is disordered.

This Escherichia coli (Bacteriophage APSE-1) protein is Putative protein p20 (20).